A 555-amino-acid chain; its full sequence is Urocanate hydratase (555 aa).

Residues 51-52 (GG), glutamine 129, 175-177 (GMG), glutamate 195, arginine 200, 241-242 (NA), 262-266 (QTSAH), 272-273 (YL), and tyrosine 321 contribute to the NAD(+) site. Cysteine 409 is a catalytic residue. Residue glycine 491 coordinates NAD(+).

Belongs to the urocanase family. It depends on NAD(+) as a cofactor.

Its subcellular location is the cytoplasm. It catalyses the reaction 4-imidazolone-5-propanoate = trans-urocanate + H2O. It participates in amino-acid degradation; L-histidine degradation into L-glutamate; N-formimidoyl-L-glutamate from L-histidine: step 2/3. Functionally, catalyzes the conversion of urocanate to 4-imidazolone-5-propionate. This Rhizorhabdus wittichii (strain DSM 6014 / CCUG 31198 / JCM 15750 / NBRC 105917 / EY 4224 / RW1) (Sphingomonas wittichii) protein is Urocanate hydratase.